Reading from the N-terminus, the 347-residue chain is NADH-ubiquinone oxidoreductase chain 2 (347 aa).

10 consecutive transmembrane segments (helical) span residues 3-23 (PPIL…VMLS), 25-45 (HWLL…PILM), 66-86 (ASML…QWVI), 93-115 (IASI…HFWV), 149-169 (INTN…GWGG), 178-198 (IMAY…TYNP), 201-221 (MILN…LFML), 237-257 (FPLI…LPPL), 274-294 (NMII…YFYL), and 325-345 (LLPP…MLSV).

Belongs to the complex I subunit 2 family. As to quaternary structure, core subunit of respiratory chain NADH dehydrogenase (Complex I) which is composed of 45 different subunits. Interacts with TMEM242.

Its subcellular location is the mitochondrion inner membrane. It catalyses the reaction a ubiquinone + NADH + 5 H(+)(in) = a ubiquinol + NAD(+) + 4 H(+)(out). Its function is as follows. Core subunit of the mitochondrial membrane respiratory chain NADH dehydrogenase (Complex I) which catalyzes electron transfer from NADH through the respiratory chain, using ubiquinone as an electron acceptor. Essential for the catalytic activity and assembly of complex I. The chain is NADH-ubiquinone oxidoreductase chain 2 from Canis lupus (Gray wolf).